Consider the following 546-residue polypeptide: Probable ATP-dependent RNA helicase DDX56 (546 aa).

Positions 7-35 (LGFEHMGLDPRLLQAVTDLGWSRPTLIQE) match the Q motif motif. Residues 38–218 (IPLALEGKDL…ELVLHNPVTL (181 aa)) enclose the Helicase ATP-binding domain. 51–58 (ARTGSGKT) serves as a coordination point for ATP. A Phosphoserine modification is found at S126. Phosphothreonine is present on T141. A DEAD box motif is present at residues 166–169 (DEAD). A Helicase C-terminal domain is found at 230 to 424 (QLQQFQVVCE…PYQFQMEEIE (195 aa)). Disordered regions lie at residues 324-344 (VKGK…PESG) and 508-546 (RKKR…AKPS). 3 stretches are compositionally biased toward basic residues: residues 325 to 334 (KGKRRGRGSK), 508 to 524 (RKKR…KKVK), and 532 to 546 (FKHR…AKPS).

Belongs to the DEAD box helicase family. DDX56/DBP9 subfamily. May form homooligomeric complexes. Interacts with IRF3. Interacts with OCT4 and POU5F1.

It is found in the nucleus. The protein resides in the nucleolus. The enzyme catalyses ATP + H2O = ADP + phosphate + H(+). Nucleolar RNA helicase that plays a role in various biological processes including innate immunity, ribosome biogenesis or nucleolus organization. Plays an essential role in maintaining nucleolar integrity in planarian stem cells. Maintains embryonic stem cells proliferation by conventional regulation of ribosome assembly and interaction with OCT4 and POU5F1 complex. Regulates antiviral innate immunity by inhibiting the virus-triggered signaling nuclear translocation of IRF3. Mechanistically, acts by disrupting the interaction between IRF3 and importin IPO5. May play a role in later stages of the processing of the pre-ribosomal particles leading to mature 60S ribosomal subunits. Has intrinsic ATPase activity. This Mus musculus (Mouse) protein is Probable ATP-dependent RNA helicase DDX56 (Ddx56).